The following is a 372-amino-acid chain: Queuine tRNA-ribosyltransferase (372 aa).

The active-site Proton acceptor is the Asp89. Substrate is bound by residues 89–93 (DSGGF), Asp161, and Gly232. The segment at 262 to 268 (GIGDLPS) is RNA binding. Residue Asp281 is the Nucleophile of the active site. The tract at residues 286–290 (TKAAR) is RNA binding; important for wobble base 34 recognition. Residues Cys319, Cys321, Cys324, and His351 each contribute to the Zn(2+) site.

This sequence belongs to the queuine tRNA-ribosyltransferase family. In terms of assembly, homodimer. Within each dimer, one monomer is responsible for RNA recognition and catalysis, while the other monomer binds to the replacement base PreQ1. The cofactor is Zn(2+).

It catalyses the reaction 7-aminomethyl-7-carbaguanine + guanosine(34) in tRNA = 7-aminomethyl-7-carbaguanosine(34) in tRNA + guanine. It participates in tRNA modification; tRNA-queuosine biosynthesis. Catalyzes the base-exchange of a guanine (G) residue with the queuine precursor 7-aminomethyl-7-deazaguanine (PreQ1) at position 34 (anticodon wobble position) in tRNAs with GU(N) anticodons (tRNA-Asp, -Asn, -His and -Tyr). Catalysis occurs through a double-displacement mechanism. The nucleophile active site attacks the C1' of nucleotide 34 to detach the guanine base from the RNA, forming a covalent enzyme-RNA intermediate. The proton acceptor active site deprotonates the incoming PreQ1, allowing a nucleophilic attack on the C1' of the ribose to form the product. After dissociation, two additional enzymatic reactions on the tRNA convert PreQ1 to queuine (Q), resulting in the hypermodified nucleoside queuosine (7-(((4,5-cis-dihydroxy-2-cyclopenten-1-yl)amino)methyl)-7-deazaguanosine). The sequence is that of Queuine tRNA-ribosyltransferase from Chlamydia trachomatis serovar A (strain ATCC VR-571B / DSM 19440 / HAR-13).